Reading from the N-terminus, the 320-residue chain is Ferrochelatase (320 aa).

Residues histidine 194 and glutamate 275 each contribute to the Fe cation site.

This sequence belongs to the ferrochelatase family.

The protein localises to the cytoplasm. It catalyses the reaction heme b + 2 H(+) = protoporphyrin IX + Fe(2+). It participates in porphyrin-containing compound metabolism; protoheme biosynthesis; protoheme from protoporphyrin-IX: step 1/1. Functionally, catalyzes the ferrous insertion into protoporphyrin IX. This Xylella fastidiosa (strain 9a5c) protein is Ferrochelatase.